The following is a 338-amino-acid chain: Cytoskeleton protein RodZ (338 aa).

The Cytoplasmic portion of the chain corresponds to methionine 1–glycine 111. The region spanning leucine 19–leucine 71 is the HTH cro/C1-type domain. The segment at residues glutamine 30–glutamate 49 is a DNA-binding region (H-T-H motif). Residues tryptophan 112–tryptophan 132 traverse the membrane as a helical; Signal-anchor for type II membrane protein segment. Over tryptophan 133–glutamine 338 the chain is Periplasmic. Composition is skewed to polar residues over residues alanine 147–alanine 180 and glycine 189–proline 214. The interval alanine 147–alanine 245 is disordered. The span at serine 220 to glutamine 239 shows a compositional bias: low complexity.

The protein belongs to the RodZ family.

The protein localises to the cell inner membrane. Cytoskeletal protein that is involved in cell-shape control through regulation of the length of the long axis. The protein is Cytoskeleton protein RodZ of Cronobacter sakazakii (strain ATCC BAA-894) (Enterobacter sakazakii).